The sequence spans 155 residues: Cytochrome c-type biogenesis protein CcmE (155 aa).

The Cytoplasmic segment spans residues methionine 1–arginine 8. A helical; Signal-anchor for type II membrane protein transmembrane segment spans residues leucine 9–alanine 29. At leucine 30–arginine 155 the chain is on the periplasmic side. Positions 124 and 128 each coordinate heme.

The protein belongs to the CcmE/CycJ family.

It localises to the cell inner membrane. Its function is as follows. Heme chaperone required for the biogenesis of c-type cytochromes. Transiently binds heme delivered by CcmC and transfers the heme to apo-cytochromes in a process facilitated by CcmF and CcmH. The chain is Cytochrome c-type biogenesis protein CcmE from Janthinobacterium sp. (strain Marseille) (Minibacterium massiliensis).